The following is a 158-amino-acid chain: Endoribonuclease YbeY (158 aa).

Zn(2+) is bound by residues H124, H128, and H134.

This sequence belongs to the endoribonuclease YbeY family. Zn(2+) is required as a cofactor.

It localises to the cytoplasm. Single strand-specific metallo-endoribonuclease involved in late-stage 70S ribosome quality control and in maturation of the 3' terminus of the 16S rRNA. The protein is Endoribonuclease YbeY of Latilactobacillus sakei subsp. sakei (strain 23K) (Lactobacillus sakei subsp. sakei).